The following is a 360-amino-acid chain: Peptide chain release factor 1 (360 aa).

Gln235 carries the N5-methylglutamine modification. Residues 291–308 (ASERRNLLGTGDRSDRNR) are compositionally biased toward basic and acidic residues. Positions 291-312 (ASERRNLLGTGDRSDRNRTYNF) are disordered.

The protein belongs to the prokaryotic/mitochondrial release factor family. Methylated by PrmC. Methylation increases the termination efficiency of RF1.

The protein localises to the cytoplasm. Its function is as follows. Peptide chain release factor 1 directs the termination of translation in response to the peptide chain termination codons UAG and UAA. In Yersinia pseudotuberculosis serotype O:1b (strain IP 31758), this protein is Peptide chain release factor 1.